Consider the following 270-residue polypeptide: MSDHYAVVGNPIAHSKSPQIHTRFAAEVGADLHYHRLWAPEDHFAPVAEAFFAGGGHGLNVTVPFKGAAYTFADTLSDRARAAGAVNTLRAEPDGRHFGDNTDGIGLLRDLQTNHGIDLAGRRLLLLGAGGAARGVLHDLLGEDPRTVVIANRTVDRAEALAGNDHRIRACGFDVLAGERFEVVINTTAAGLQGEMPPLPDDLLAPGATAYDLVYADEDTPFMAWARARGAVTVCDGLGMLVEQAAESFYQWRGTYPQTAPVIEALRIGA.

Shikimate contacts are provided by residues 15–17 (SKS) and Thr-62. Lys-66 serves as the catalytic Proton acceptor. Asp-78 is a binding site for NADP(+). Residues Asn-87 and Asp-103 each contribute to the shikimate site. Residues 128–132 (GAGGA), 152–157 (NRTVDR), and Leu-213 contribute to the NADP(+) site. Residue Tyr-215 participates in shikimate binding. Gly-237 is a binding site for NADP(+).

The protein belongs to the shikimate dehydrogenase family. In terms of assembly, homodimer.

It carries out the reaction shikimate + NADP(+) = 3-dehydroshikimate + NADPH + H(+). The protein operates within metabolic intermediate biosynthesis; chorismate biosynthesis; chorismate from D-erythrose 4-phosphate and phosphoenolpyruvate: step 4/7. Involved in the biosynthesis of the chorismate, which leads to the biosynthesis of aromatic amino acids. Catalyzes the reversible NADPH linked reduction of 3-dehydroshikimate (DHSA) to yield shikimate (SA). The protein is Shikimate dehydrogenase (NADP(+)) of Halorhodospira halophila (strain DSM 244 / SL1) (Ectothiorhodospira halophila (strain DSM 244 / SL1)).